A 331-amino-acid polypeptide reads, in one-letter code: Phosphoribosylformylglycinamidine cyclo-ligase (331 aa).

It belongs to the AIR synthase family.

The protein resides in the cytoplasm. It catalyses the reaction 2-formamido-N(1)-(5-O-phospho-beta-D-ribosyl)acetamidine + ATP = 5-amino-1-(5-phospho-beta-D-ribosyl)imidazole + ADP + phosphate + H(+). Its pathway is purine metabolism; IMP biosynthesis via de novo pathway; 5-amino-1-(5-phospho-D-ribosyl)imidazole from N(2)-formyl-N(1)-(5-phospho-D-ribosyl)glycinamide: step 2/2. The sequence is that of Phosphoribosylformylglycinamidine cyclo-ligase from Clostridium botulinum (strain Langeland / NCTC 10281 / Type F).